A 30-amino-acid polypeptide reads, in one-letter code: Kappa-sparatoxin-Hv1d (30 aa).

3 disulfides stabilise this stretch: Cys-3/Cys-17, Cys-10/Cys-22, and Cys-16/Cys-26.

As to expression, expressed by the venom gland.

It is found in the secreted. Functionally, inhibitor of voltage-gated potassium channels of the Kv4/KCND family. Blocks calcium channels (Cav). In Heteropoda venatoria (Brown huntsman spider), this protein is Kappa-sparatoxin-Hv1d.